A 2081-amino-acid chain; its full sequence is Non-reducing polyketide synthase terA (2081 aa).

Residues 85 to 190 are N-terminal acylcarrier protein transacylase (SAT) domain (SAT); that stretch reads TLTLAFRIGV…ISLDIFAPFH (106 aa). One can recognise a Ketosynthase family 3 (KS3) domain in the interval 316–749; sequence AQKIAIVGMA…GGNTGLLLED (434 aa). Active-site for beta-ketoacyl synthase activity residues include cysteine 488, histidine 623, and histidine 667. The malonyl-CoA:ACP transacylase (MAT) domain stretch occupies residues 849-1147; that stretch reads LFTGQGSHYT…LTLPSLRKQE (299 aa). Positions 1230–1364 are N-terminal hotdog fold; that stretch reads QKVIKEDFGQ…CHVEYGDIKT (135 aa). The PKS/mFAS DH domain occupies 1230-1539; the sequence is QKVIKEDFGQ…FKAIPRAVIN (310 aa). The product template (PT) domain stretch occupies residues 1259 to 1536; the sequence is VTGHLVNGSA…GVKFKAIPRA (278 aa). The active-site Proton acceptor; for dehydratase activity is histidine 1262. The C-terminal hotdog fold stretch occupies residues 1392–1539; it reads YQKLDRKAAY…FKAIPRAVIN (148 aa). Aspartate 1452 acts as the Proton donor; for dehydratase activity in catalysis. The interval 1549–1578 is disordered; it reads KALEKSAPRQNPKATATKTTQKPQAPVPVP. The span at 1558–1572 shows a compositional bias: low complexity; the sequence is QNPKATATKTTQKPQ. One can recognise a Carrier 1 domain in the interval 1580-1658; it reads KQNKAIIDDF…QVKELILKLA (79 aa). Serine 1617 carries the O-(pantetheine 4'-phosphoryl)serine modification. Residues 1659–1700 are disordered; sequence GSSSDENTTDTPDEEEDPATADADNTEMIRENPLESVSPNVS. Residues 1665-1677 are compositionally biased toward acidic residues; it reads NTTDTPDEEEDPA. Positions 1699–1776 constitute a Carrier 2 domain; it reads VSSSEAMDGF…QARLAIASLM (78 aa). Serine 1736 bears the O-(pantetheine 4'-phosphoryl)serine mark. The tract at residues 1783–1809 is disordered; it reads GATTPYSGSDDAKSSTSSLTAGSVLTP. A thioesterase (TE) domain region spans residues 1840-2070; the sequence is TLFLLPDGSG…TMMREPKVNQ (231 aa).

It catalyses the reaction 3 malonyl-CoA + acetyl-CoA + 2 H(+) = orsellinate + 3 CO2 + 4 CoA. It functions in the pathway secondary metabolite biosynthesis. In terms of biological role, non-reducing polyketide synthase; part of the gene cluster that mediates the biosynthesis of terrein, a fungal metabolite with ecological, antimicrobial, antiproliferative, and antioxidative activities. The first step in the pathway is performed by the polyketide synthase terA that produces 4-hydroxy-6-methylpyranon (4-HMP), orsellinic acid (OA), and 2,3-dehydro-6-hydroxymellein (2,3-dehydro-6-HM) by condensing acetyl-CoA with two, three, or four malonyl-CoA units, respectively. 4-HMP and OA are not pathway intermediates, but are rather shunt or side products. 2,3-dehydro-6-HM is further converted to 6-hydroxymellein (6-HM) by the 6-hydroxymellein synthase terB. The monooxygenases terC and terD, the multicopper oxidase terE and the Kelch-like protein terF are then involved in the transformation of 6-HM to terrein. Even if they are co-regulated with the other terrein cluster genes, terH and terI seem to be dispensable for terrein production; whereas one or both of the 2 transporters terG and terJ are probably required for efficient secretion of metabolites. The polypeptide is Non-reducing polyketide synthase terA (Aspergillus terreus (strain NIH 2624 / FGSC A1156)).